Consider the following 640-residue polypeptide: WW domain-binding protein 11 (640 aa).

A compositionally biased stretch (polar residues) spans 1–11 (MGRRSTSSTKS). A disordered region spans residues 1-37 (MGRRSTSSTKSGKFMNPTDQARKEARKRELKKNKKQR). Residues 28–37 (RELKKNKKQR) show a composition bias toward basic residues. Positions 75 to 122 (EKVLRDKRKKLRETFERIVRLYERENPETYKELRKLELEYETKRGQLS) form a coiled coil. 3 disordered regions span residues 155 to 174 (DIPL…SALG), 187 to 563 (VPRL…ISAK), and 582 to 625 (RVRR…LKTK). A compositionally biased stretch (pro residues) spans 194–207 (RKPPGPPPGPPPPQ). Residues 230-240 (DGGRDSDSKSE) show a composition bias toward basic and acidic residues. Residues 241 to 251 (ADEESDSQEDS) show a composition bias toward acidic residues. Residues 252–274 (SAEREDSDRGERDEERERADKHT) are compositionally biased toward basic and acidic residues. Serine 285 carries the phosphoserine modification. A compositionally biased stretch (acidic residues) spans 315 to 338 (PEEEEEDEEEEYSESEDSEAEDQA). Residues 356–371 (APMAAQQPPSLMQAPP) are compositionally biased toward low complexity. Pro residues-rich tracts occupy residues 372–412 (ITGP…PPGL) and 422–491 (RLLP…PPLN). The PGR signature appears at 421-432 (PRLLPPGPPPGR). The span at 547–558 (GSGGASAQGGGA) shows a compositional bias: gly residues. Over residues 586–599 (DRAGGTGRREEERP) the composition is skewed to basic and acidic residues. The segment covering 603–616 (QQTPAHQAPPIAHA) has biased composition (low complexity).

It localises to the cytoplasm. The protein localises to the nucleus. Activates pre-mRNA splicing. This chain is WW domain-binding protein 11 (wbp11), found in Danio rerio (Zebrafish).